The following is a 702-amino-acid chain: Lipase maturation factor 2 (702 aa).

8 helical membrane passes run 10–30, 75–95, 164–184, 226–246, 259–279, 316–336, 363–383, and 398–418; these read LFLQ…YTQI, AQGL…ALLL, DLPF…SGVV, LSVV…FAPI, LLQV…LTLV, LLLE…YFGL, VTLP…LVVL, and AGIQ…ISLV. Residue asparagine 488 is glycosylated (N-linked (GlcNAc...) asparagine). Residues 636-656 form a helical membrane-spanning segment; it reads ILLWGLFGAVVAIRVVQTLLA. Residues 660 to 702 are disordered; the sequence is LQSSKQTREEKRKQTSKKDSRAASEQAAANSNSRDSWAPRRKK. The span at 665-681 shows a compositional bias: basic and acidic residues; that stretch reads QTREEKRKQTSKKDSRA. Residues 682–693 are compositionally biased toward low complexity; it reads ASEQAAANSNSR.

The protein belongs to the lipase maturation factor family.

The protein localises to the endoplasmic reticulum membrane. Involved in the maturation of specific proteins in the endoplasmic reticulum. May be required for maturation and transport of active lipoprotein lipase (LPL) through the secretory pathway. The chain is Lipase maturation factor 2 (Lmf2) from Mus musculus (Mouse).